Reading from the N-terminus, the 246-residue chain is Ribonuclease PH (246 aa).

Residues Arg91 and 129 to 131 (GTR) contribute to the phosphate site.

The protein belongs to the RNase PH family. Homohexameric ring arranged as a trimer of dimers.

It carries out the reaction tRNA(n+1) + phosphate = tRNA(n) + a ribonucleoside 5'-diphosphate. Functionally, phosphorolytic 3'-5' exoribonuclease that plays an important role in tRNA 3'-end maturation. Removes nucleotide residues following the 3'-CCA terminus of tRNAs; can also add nucleotides to the ends of RNA molecules by using nucleoside diphosphates as substrates, but this may not be physiologically important. Probably plays a role in initiation of 16S rRNA degradation (leading to ribosome degradation) during starvation. This chain is Ribonuclease PH, found in Burkholderia orbicola (strain MC0-3).